The following is a 268-amino-acid chain: tRNA pseudouridine synthase A (268 aa).

Asp-54 acts as the Nucleophile in catalysis. Tyr-112 is a binding site for substrate.

The protein belongs to the tRNA pseudouridine synthase TruA family. In terms of assembly, homodimer.

It catalyses the reaction uridine(38/39/40) in tRNA = pseudouridine(38/39/40) in tRNA. Its function is as follows. Formation of pseudouridine at positions 38, 39 and 40 in the anticodon stem and loop of transfer RNAs. The protein is tRNA pseudouridine synthase A of Bordetella petrii (strain ATCC BAA-461 / DSM 12804 / CCUG 43448).